Reading from the N-terminus, the 390-residue chain is Lipid-A-disaccharide synthase (390 aa).

The protein belongs to the LpxB family.

It carries out the reaction a lipid X + a UDP-2-N,3-O-bis[(3R)-3-hydroxyacyl]-alpha-D-glucosamine = a lipid A disaccharide + UDP + H(+). Its pathway is bacterial outer membrane biogenesis; LPS lipid A biosynthesis. Functionally, condensation of UDP-2,3-diacylglucosamine and 2,3-diacylglucosamine-1-phosphate to form lipid A disaccharide, a precursor of lipid A, a phosphorylated glycolipid that anchors the lipopolysaccharide to the outer membrane of the cell. The protein is Lipid-A-disaccharide synthase (lpxB) of Haemophilus influenzae (strain ATCC 51907 / DSM 11121 / KW20 / Rd).